Consider the following 114-residue polypeptide: UPF0102 protein HP_0823 (114 aa).

The protein belongs to the UPF0102 family.

The polypeptide is UPF0102 protein HP_0823 (Helicobacter pylori (strain ATCC 700392 / 26695) (Campylobacter pylori)).